A 744-amino-acid chain; its full sequence is 1,4-alpha-glucan branching enzyme GlgB (744 aa).

The active-site Nucleophile is aspartate 415. Residue glutamate 468 is the Proton donor of the active site.

This sequence belongs to the glycosyl hydrolase 13 family. GlgB subfamily. As to quaternary structure, monomer.

The catalysed reaction is Transfers a segment of a (1-&gt;4)-alpha-D-glucan chain to a primary hydroxy group in a similar glucan chain.. It functions in the pathway glycan biosynthesis; glycogen biosynthesis. Catalyzes the formation of the alpha-1,6-glucosidic linkages in glycogen by scission of a 1,4-alpha-linked oligosaccharide from growing alpha-1,4-glucan chains and the subsequent attachment of the oligosaccharide to the alpha-1,6 position. In Shewanella frigidimarina (strain NCIMB 400), this protein is 1,4-alpha-glucan branching enzyme GlgB.